Consider the following 635-residue polypeptide: MGFLVDTQKEGGGHSWGYVRSLVRRKQVDSANGQSHGHQLARALTVPHLVAIGVGATIGAGVYILVGTVAREHSGPSLALSFLIAGIAAGLSAFCYAELSSRCPSAGSAYHYSYICVGEGVAWIIGWALILEYTIGGSAVARGISPNLALIFGGEDGLPAILARHQIPGLDIVVDPCAAILVFVVTGLLCMGIKESTFAQGIVTAVNVCVLLFVIVAGSYLGFKTGWPGYELPTGFFPFGVDGMFAGSATVFFAFIGFDSVASTAEEVRNPQRDLPIGIGLALLLCCSLYMMVSIVIVGLIPYYAMDPDTPISSAFASHDMQWAVYLITLGAVMALCSALMGALLPQPRILMAMARDGLLPSIFSDINKRTQVPVKATVATGLCAATLAFFMDVSQLAGMVSVGTLLAFTMVAISVLILRYVPPDEQPLPSSLQERIDSVSFICGETTSSGHVGTSDSSHQPLIVNNDALVDVPLIKNQEALGCLVLSEETRRIVAGWSIMFTCVGAFLLSYAASSLSFPGLIRYPLCGVGGCLLLAGLIALSSIDQDDARHTFGHSGGYMCPFVPLLPIICILINMYLLVNLGSATWARVSVWLLIGVIVYVFYGRKNSSLANAVYVTTAHAEEIYREHEGSLA.

The Cytoplasmic segment spans residues 1–48 (MGFLVDTQKEGGGHSWGYVRSLVRRKQVDSANGQSHGHQLARALTVPH). The chain crosses the membrane as a helical span at residues 49–69 (LVAIGVGATIGAGVYILVGTV). Over 70–76 (AREHSGP) the chain is Vacuolar. The helical transmembrane segment at 77 to 97 (SLALSFLIAGIAAGLSAFCYA) threads the bilayer. Residues 98–108 (ELSSRCPSAGS) are Cytoplasmic-facing. Residues 109–131 (AYHYSYICVGEGVAWIIGWALIL) traverse the membrane as a helical segment. The Vacuolar segment spans residues 132-171 (EYTIGGSAVARGISPNLALIFGGEDGLPAILARHQIPGLD). The helical transmembrane segment at 172–192 (IVVDPCAAILVFVVTGLLCMG) threads the bilayer. The Cytoplasmic portion of the chain corresponds to 193 to 200 (IKESTFAQ). A helical membrane pass occupies residues 201 to 221 (GIVTAVNVCVLLFVIVAGSYL). At 222-235 (GFKTGWPGYELPTG) the chain is on the vacuolar side. Residues 236–256 (FFPFGVDGMFAGSATVFFAFI) traverse the membrane as a helical segment. Topologically, residues 257–280 (GFDSVASTAEEVRNPQRDLPIGIG) are cytoplasmic. A helical membrane pass occupies residues 281–301 (LALLLCCSLYMMVSIVIVGLI). Residues 302 to 324 (PYYAMDPDTPISSAFASHDMQWA) are Vacuolar-facing. A helical membrane pass occupies residues 325–345 (VYLITLGAVMALCSALMGALL). At 346 to 376 (PQPRILMAMARDGLLPSIFSDINKRTQVPVK) the chain is on the cytoplasmic side. Residues 377–397 (ATVATGLCAATLAFFMDVSQL) traverse the membrane as a helical segment. A topological domain (vacuolar) is located at residue Ala-398. Residues 399 to 419 (GMVSVGTLLAFTMVAISVLIL) traverse the membrane as a helical segment. At 420-493 (RYVPPDEQPL…CLVLSEETRR (74 aa)) the chain is on the cytoplasmic side. Residues 494–514 (IVAGWSIMFTCVGAFLLSYAA) traverse the membrane as a helical segment. The Vacuolar portion of the chain corresponds to 515-524 (SSLSFPGLIR). A helical transmembrane segment spans residues 525–545 (YPLCGVGGCLLLAGLIALSSI). The Cytoplasmic segment spans residues 546–560 (DQDDARHTFGHSGGY). The chain crosses the membrane as a helical span at residues 561–581 (MCPFVPLLPIICILINMYLLV). Topologically, residues 582–585 (NLGS) are vacuolar. Residues 586 to 606 (ATWARVSVWLLIGVIVYVFYG) traverse the membrane as a helical segment. At 607 to 635 (RKNSSLANAVYVTTAHAEEIYREHEGSLA) the chain is on the cytoplasmic side.

Belongs to the amino acid-polyamine-organocation (APC) superfamily. Cationic amino acid transporter (CAT) (TC 2.A.3.3) family. As to expression, expressed in roots, stems, flowers, leaves, and siliques.

The protein resides in the vacuole membrane. Its function is as follows. Permease involved in the transport of the cationic amino acids. This is Cationic amino acid transporter 2, vacuolar (CAT2) from Arabidopsis thaliana (Mouse-ear cress).